A 345-amino-acid chain; its full sequence is Olfactory receptor 11G2 (345 aa).

The Extracellular segment spans residues 1-62 (MHFLSQNDLN…LGFPCPREGQ (62 aa)). A glycan (N-linked (GlcNAc...) asparagine) is linked at Asn-43. The chain crosses the membrane as a helical span at residues 63–83 (ILLFVLFTVVYLLTLMGNGSI). Over 84–92 (ICAVHWDQR) the chain is Cytoplasmic. Residues 93–113 (LHAPMYILLANFSFLEICYVT) traverse the membrane as a helical segment. Topologically, residues 114-135 (STVPSMLANFLSDTKIISFSGC) are extracellular. Residues Cys-135 and Cys-217 are joined by a disulfide bond. A helical transmembrane segment spans residues 136–156 (FLQFYFFFSLGSTECFFLAVM). Residues 157-181 (AFDRYLAICRPLRYPTIMTRRLCTN) are Cytoplasmic-facing. The chain crosses the membrane as a helical span at residues 182–202 (LVVNCWVLGFIWFLIPIVNIS). Residues 203–241 (QMSFCGSRIIDHFLCDPAPLLTLTCKKGPVIELVFSVLS) are Extracellular-facing. The helical transmembrane segment at 242–264 (PLPVFMLFLFIVGSYALVVRAVL) threads the bilayer. At 265–275 (RVPSAAGRRKA) the chain is on the cytoplasmic side. Residues 276-296 (FSTCGSHLAVVSLFYGSVLVM) form a helical membrane-spanning segment. The Extracellular portion of the chain corresponds to 297 to 309 (YGSPPSKNEAGKQ). A helical membrane pass occupies residues 310–330 (KTVTLFYSVVTPLLNPVIYSL). The Cytoplasmic portion of the chain corresponds to 331–345 (RNKDMRKALKKFWGT).

This sequence belongs to the G-protein coupled receptor 1 family.

The protein resides in the cell membrane. Its function is as follows. Odorant receptor. The chain is Olfactory receptor 11G2 (OR11G2) from Homo sapiens (Human).